The chain runs to 372 residues: Protein-glutamate methylesterase/protein-glutamine glutaminase (372 aa).

The Response regulatory domain occupies Arg-5–Thr-123. Asp-56 is modified (4-aspartylphosphate). A compositionally biased stretch (polar residues) spans Gly-140–Ser-151. A disordered region spans residues Gly-140–Arg-177. The span at Pro-167–Arg-177 shows a compositional bias: basic and acidic residues. The CheB-type methylesterase domain occupies Glu-178–Ile-364. Active-site residues include Ser-190, His-217, and Asp-313.

This sequence belongs to the CheB family. Phosphorylated by CheA. Phosphorylation of the N-terminal regulatory domain activates the methylesterase activity.

The protein localises to the cytoplasm. The catalysed reaction is [protein]-L-glutamate 5-O-methyl ester + H2O = L-glutamyl-[protein] + methanol + H(+). The enzyme catalyses L-glutaminyl-[protein] + H2O = L-glutamyl-[protein] + NH4(+). Involved in chemotaxis. Part of a chemotaxis signal transduction system that modulates chemotaxis in response to various stimuli. Catalyzes the demethylation of specific methylglutamate residues introduced into the chemoreceptors (methyl-accepting chemotaxis proteins or MCP) by CheR. Also mediates the irreversible deamidation of specific glutamine residues to glutamic acid. This chain is Protein-glutamate methylesterase/protein-glutamine glutaminase, found in Treponema denticola (strain ATCC 35405 / DSM 14222 / CIP 103919 / JCM 8153 / KCTC 15104).